A 62-amino-acid chain; its full sequence is Large ribosomal subunit protein bL32 (62 aa).

The protein belongs to the bacterial ribosomal protein bL32 family.

In Treponema pallidum (strain Nichols), this protein is Large ribosomal subunit protein bL32 (rpmF).